Here is a 467-residue protein sequence, read N- to C-terminus: 5'-nucleotidase domain-containing protein 1 (467 aa).

D16 acts as the Nucleophile in catalysis. 2 residues coordinate Mg(2+): D16 and D18. Catalysis depends on D18, which acts as the Proton donor. The residue at position 181 (K181) is an N6-acetyllysine. D323 is a binding site for Mg(2+).

The protein belongs to the 5'(3')-deoxyribonucleotidase family.

The sequence is that of 5'-nucleotidase domain-containing protein 1 (Nt5dc1) from Mus musculus (Mouse).